A 137-amino-acid chain; its full sequence is NTF2-related export protein (137 aa).

An NTF2 domain is found at 19–135; it reads ESKKFMDVYY…YKVKSDRFRY (117 aa).

As to quaternary structure, preferentially binds Ran-GTP.

It is found in the nucleus. Functionally, stimulator of protein export for NES-containing proteins. Also plays a role in the nuclear export of U1 snRNA, tRNA, and mRNA. In Caenorhabditis elegans, this protein is NTF2-related export protein (nxt-1).